The following is a 176-amino-acid chain: NAD(P)H-quinone oxidoreductase subunit 6, chloroplastic (176 aa).

5 helical membrane-spanning segments follow: residues 10-30 (FLLV…VLLP), 32-52 (PIYS…FYIL), 61-81 (AQLL…VMFM), 92-112 (LWTV…ISLI), and 152-172 (FFLP…GAIA).

The protein belongs to the complex I subunit 6 family. In terms of assembly, NDH is composed of at least 16 different subunits, 5 of which are encoded in the nucleus.

The protein localises to the plastid. It is found in the chloroplast thylakoid membrane. It catalyses the reaction a plastoquinone + NADH + (n+1) H(+)(in) = a plastoquinol + NAD(+) + n H(+)(out). The enzyme catalyses a plastoquinone + NADPH + (n+1) H(+)(in) = a plastoquinol + NADP(+) + n H(+)(out). NDH shuttles electrons from NAD(P)H:plastoquinone, via FMN and iron-sulfur (Fe-S) centers, to quinones in the photosynthetic chain and possibly in a chloroplast respiratory chain. The immediate electron acceptor for the enzyme in this species is believed to be plastoquinone. Couples the redox reaction to proton translocation, and thus conserves the redox energy in a proton gradient. The sequence is that of NAD(P)H-quinone oxidoreductase subunit 6, chloroplastic (ndhG) from Solanum lycopersicum (Tomato).